A 438-amino-acid chain; its full sequence is Glutamyl-tRNA reductase (438 aa).

Substrate-binding positions include 55–58 (TCNR), serine 118, 123–125 (ETQ), and glutamine 129. Cysteine 56 functions as the Nucleophile in the catalytic mechanism. An NADP(+)-binding site is contributed by 198–203 (GAGDMI).

This sequence belongs to the glutamyl-tRNA reductase family. Homodimer.

It carries out the reaction (S)-4-amino-5-oxopentanoate + tRNA(Glu) + NADP(+) = L-glutamyl-tRNA(Glu) + NADPH + H(+). It functions in the pathway porphyrin-containing compound metabolism; protoporphyrin-IX biosynthesis; 5-aminolevulinate from L-glutamyl-tRNA(Glu): step 1/2. Functionally, catalyzes the NADPH-dependent reduction of glutamyl-tRNA(Glu) to glutamate 1-semialdehyde (GSA). This chain is Glutamyl-tRNA reductase, found in Polynucleobacter asymbioticus (strain DSM 18221 / CIP 109841 / QLW-P1DMWA-1) (Polynucleobacter necessarius subsp. asymbioticus).